The chain runs to 736 residues: Oligopeptide transporter 6 (736 aa).

Transmembrane regions (helical) follow at residues 43–63 (MWVLGIGACIVLSFINQFFWY), 66–86 (MPLSITGISAQIAVVPLGHLM), 116–136 (VLITIFANSGAGSVYATHILS), 148–168 (FLPAFLVMITTQILGFGWAGL), 210–230 (FFLIVLVASFAYYIFPGYLFT), 258–278 (LGIGSIGFDWVTISAYLGSPL), 288–308 (VAIGFVLVMYIVTPVCYWLNI), 357–377 (FFAVTYGLGFATLSATIVHVL), 412–432 (VPLWWFLVILLLNIALIMFIS), 443–463 (WWGVLLACAIAISFTPLIGVI), 489–511 (PVANMCFKVYGYISMTQALTFIS), 527–547 (FMAQVAGTLVAVVVYTGTAWW), 602–622 (WFFLVGAIAPLLVWLATKMFP), 645–665 (ATAVNFTSWLIVAFIFGHFIF), and 678–698 (VLSGGLDAGSAFMTILLFLAL).

This sequence belongs to the oligopeptide OPT transporter (TC 2.A.67.1) family. Expressed in flowers and roots, and at a low level in leaves and stems. Detected in the cambial zone of the vascular bundles and in the region of lateral root initiation. Low expression in the vascular network of the petals and high in the stamen filaments and the gynoecium.

Its subcellular location is the membrane. In terms of biological role, involved in the translocation of tetra- and pentapeptides across the cellular membrane in an energy-dependent manner. Also involved in transport of glutathione derivatives and metal complexes, and may be involved in stress resistance. This chain is Oligopeptide transporter 6 (OPT6), found in Arabidopsis thaliana (Mouse-ear cress).